The primary structure comprises 191 residues: LHFPL tetraspan subfamily member 7 protein (191 aa).

4 helical membrane-spanning segments follow: residues 6 to 26 (MGSL…FSLM), 72 to 92 (IAAV…VLVL), 112 to 132 (YAQI…PFNL), and 154 to 174 (LGWG…LPFI).

It belongs to the TMEM211 family.

It is found in the membrane. The protein is LHFPL tetraspan subfamily member 7 protein (lhfpl7) of Xenopus tropicalis (Western clawed frog).